The following is a 740-amino-acid chain: Phosphoribosylformylglycinamidine synthase subunit PurL (740 aa).

The active site involves His55. Tyr58 and Lys97 together coordinate ATP. Glu99 is a Mg(2+) binding site. Substrate contacts are provided by residues 100–103 (SHNH) and Arg122. Residue His101 is the Proton acceptor of the active site. Asp123 provides a ligand contact to Mg(2+). Residue Gln246 coordinates substrate. Asp276 is a Mg(2+) binding site. Position 320–322 (320–322 (ESQ)) interacts with substrate. Residues Asp501 and Gly538 each coordinate ATP. Residue Asn539 participates in Mg(2+) binding. Residue Ser541 coordinates substrate.

The protein belongs to the FGAMS family. In terms of assembly, monomer. Part of the FGAM synthase complex composed of 1 PurL, 1 PurQ and 2 PurS subunits.

It is found in the cytoplasm. It carries out the reaction N(2)-formyl-N(1)-(5-phospho-beta-D-ribosyl)glycinamide + L-glutamine + ATP + H2O = 2-formamido-N(1)-(5-O-phospho-beta-D-ribosyl)acetamidine + L-glutamate + ADP + phosphate + H(+). The protein operates within purine metabolism; IMP biosynthesis via de novo pathway; 5-amino-1-(5-phospho-D-ribosyl)imidazole from N(2)-formyl-N(1)-(5-phospho-D-ribosyl)glycinamide: step 1/2. Part of the phosphoribosylformylglycinamidine synthase complex involved in the purines biosynthetic pathway. Catalyzes the ATP-dependent conversion of formylglycinamide ribonucleotide (FGAR) and glutamine to yield formylglycinamidine ribonucleotide (FGAM) and glutamate. The FGAM synthase complex is composed of three subunits. PurQ produces an ammonia molecule by converting glutamine to glutamate. PurL transfers the ammonia molecule to FGAR to form FGAM in an ATP-dependent manner. PurS interacts with PurQ and PurL and is thought to assist in the transfer of the ammonia molecule from PurQ to PurL. The sequence is that of Phosphoribosylformylglycinamidine synthase subunit PurL from Lacticaseibacillus casei (Lactobacillus casei).